The primary structure comprises 171 residues: Iron-sulfur cluster assembly protein 3 (171 aa).

A mitochondrion-targeting transit peptide spans 1–49; sequence MLRQTTKRAFLGLASQNPTPFPVVSRLYHPNVIDHYDNPRNVGSFDKND.

This sequence belongs to the NifU family. As to quaternary structure, component of the core Fe-S cluster (ISC) assembly machinery. The cofactor is [2Fe-2S] cluster. In terms of tissue distribution, mostly expressed in flowers and pollen, and, to a lower extent, in leaves and roots.

It localises to the mitochondrion matrix. It functions in the pathway cofactor biosynthesis; iron-sulfur cluster biosynthesis. In terms of biological role, scaffold protein for the de novo synthesis of iron-sulfur (Fe-S) clusters within mitochondria, which is required for maturation of both mitochondrial and cytoplasmic [2Fe-2S] and [4Fe-4S] proteins. First, a [2Fe-2S] cluster is transiently assembled on the scaffold protein ISCU (ISU1, ISU2 or ISU3). In a second step, the cluster is released from ISCU, transferred to a glutaredoxin, followed by the formation of mitochondrial [2Fe-2S] proteins, the synthesis of [4Fe-4S] clusters and their target-specific insertion into the recipient apoproteins. Cluster assembly on ISCU depends on the function of the cysteine desulfurase complex NFS1-ISD11, which serves as the sulfur donor for cluster synthesis, the iron-binding protein frataxin as the putative iron donor, and the electron transfer chain comprised of ferredoxin reductase and ferredoxin, which receive their electrons from NADH. In Arabidopsis thaliana (Mouse-ear cress), this protein is Iron-sulfur cluster assembly protein 3 (ISU3).